A 429-amino-acid polypeptide reads, in one-letter code: Adenylosuccinate synthetase (429 aa).

Residues 12-18 and 40-42 each bind GTP; these read GDEGKGK and GHT. Aspartate 13 acts as the Proton acceptor in catalysis. Positions 13 and 40 each coordinate Mg(2+). IMP is bound by residues 13-16, 38-41, threonine 128, arginine 142, glutamine 223, threonine 238, and arginine 302; these read DEGK and NAGH. The active-site Proton donor is histidine 41. 298-304 is a substrate binding site; sequence TTTGRPR. Residues arginine 304, 330-332, and 412-414 contribute to the GTP site; these read SID and SVG.

Belongs to the adenylosuccinate synthetase family. In terms of assembly, homodimer. It depends on Mg(2+) as a cofactor.

Its subcellular location is the cytoplasm. It carries out the reaction IMP + L-aspartate + GTP = N(6)-(1,2-dicarboxyethyl)-AMP + GDP + phosphate + 2 H(+). The protein operates within purine metabolism; AMP biosynthesis via de novo pathway; AMP from IMP: step 1/2. Its function is as follows. Plays an important role in the de novo pathway of purine nucleotide biosynthesis. Catalyzes the first committed step in the biosynthesis of AMP from IMP. This chain is Adenylosuccinate synthetase, found in Bacillus cereus (strain ATCC 10987 / NRS 248).